A 298-amino-acid polypeptide reads, in one-letter code: UDP-3-O-acyl-N-acetylglucosamine deacetylase (298 aa).

3 residues coordinate Zn(2+): His79, His239, and Asp243. The active-site Proton donor is the His266.

This sequence belongs to the LpxC family. Zn(2+) is required as a cofactor.

It carries out the reaction a UDP-3-O-[(3R)-3-hydroxyacyl]-N-acetyl-alpha-D-glucosamine + H2O = a UDP-3-O-[(3R)-3-hydroxyacyl]-alpha-D-glucosamine + acetate. The protein operates within glycolipid biosynthesis; lipid IV(A) biosynthesis; lipid IV(A) from (3R)-3-hydroxytetradecanoyl-[acyl-carrier-protein] and UDP-N-acetyl-alpha-D-glucosamine: step 2/6. Its function is as follows. Catalyzes the hydrolysis of UDP-3-O-myristoyl-N-acetylglucosamine to form UDP-3-O-myristoylglucosamine and acetate, the committed step in lipid A biosynthesis. This is UDP-3-O-acyl-N-acetylglucosamine deacetylase from Wigglesworthia glossinidia brevipalpis.